The following is a 244-amino-acid chain: Mediator of RNA polymerase II transcription subunit 19 (244 aa).

Disordered regions lie at residues 1-56 (MENF…PGAD) and 171-244 (PKKK…SSLR). A compositionally biased stretch (pro residues) spans 26–47 (GKPPPPPPPPAGGGPGTAPPPT). Basic residues predominate over residues 171 to 182 (PKKKNKHKHKQS). The residue at position 194 (Ser194) is a Phosphoserine. A compositionally biased stretch (basic residues) spans 212–224 (KRKKKEKKKKKNR). Residue Ser226 is modified to Phosphoserine. A compositionally biased stretch (low complexity) spans 234-244 (SSQASSSSSLR).

Belongs to the Mediator complex subunit 19 family. In terms of assembly, component of the Mediator complex, which is composed of MED1, MED4, MED6, MED7, MED8, MED9, MED10, MED11, MED12, MED13, MED13L, MED14, MED15, MED16, MED17, MED18, MED19, MED20, MED21, MED22, MED23, MED24, MED25, MED26, MED27, MED29, MED30, MED31, CCNC, CDK8 and CDC2L6/CDK11. The MED12, MED13, CCNC and CDK8 subunits form a distinct module termed the CDK8 module. Mediator containing the CDK8 module is less active than Mediator lacking this module in supporting transcriptional activation. Individual preparations of the Mediator complex lacking one or more distinct subunits have been variously termed ARC, CRSP, DRIP, PC2, SMCC and TRAP.

The protein resides in the nucleus. In terms of biological role, component of the Mediator complex, a coactivator involved in the regulated transcription of nearly all RNA polymerase II-dependent genes. Mediator functions as a bridge to convey information from gene-specific regulatory proteins to the basal RNA polymerase II transcription machinery. Mediator is recruited to promoters by direct interactions with regulatory proteins and serves as a scaffold for the assembly of a functional preinitiation complex with RNA polymerase II and the general transcription factors. This chain is Mediator of RNA polymerase II transcription subunit 19 (MED19), found in Homo sapiens (Human).